Here is a 932-residue protein sequence, read N- to C-terminus: Glycine dehydrogenase (decarboxylating) (932 aa).

Lys-685 carries the post-translational modification N6-(pyridoxal phosphate)lysine.

Belongs to the GcvP family. As to quaternary structure, the glycine cleavage system is composed of four proteins: P, T, L and H. Requires pyridoxal 5'-phosphate as cofactor.

The enzyme catalyses N(6)-[(R)-lipoyl]-L-lysyl-[glycine-cleavage complex H protein] + glycine + H(+) = N(6)-[(R)-S(8)-aminomethyldihydrolipoyl]-L-lysyl-[glycine-cleavage complex H protein] + CO2. Functionally, the glycine cleavage system catalyzes the degradation of glycine. The P protein binds the alpha-amino group of glycine through its pyridoxal phosphate cofactor; CO(2) is released and the remaining methylamine moiety is then transferred to the lipoamide cofactor of the H protein. This Brucella canis (strain ATCC 23365 / NCTC 10854 / RM-666) protein is Glycine dehydrogenase (decarboxylating).